A 150-amino-acid chain; its full sequence is Flagellar assembly factor FliW (150 aa).

The protein belongs to the FliW family. Interacts with translational regulator CsrA and flagellin(s).

It is found in the cytoplasm. Functionally, acts as an anti-CsrA protein, binds CsrA and prevents it from repressing translation of its target genes, one of which is flagellin. Binds to flagellin and participates in the assembly of the flagellum. The protein is Flagellar assembly factor FliW of Leptospira interrogans serogroup Icterohaemorrhagiae serovar copenhageni (strain Fiocruz L1-130).